The chain runs to 166 residues: Sec-independent protein translocase protein TatB (166 aa).

The chain crosses the membrane as a helical span at residues 2–22 (FNDIGALELLTLGVLAVLVFG). The tract at residues 110–166 (TPAASDTANSAVNGSAGAAADGVTTSLTKTGETTPDLLKKAPQQAQPERPPFDADAT) is disordered. Residues 117-129 (ANSAVNGSAGAAA) show a composition bias toward low complexity. The segment covering 132–142 (VTTSLTKTGET) has biased composition (polar residues).

Belongs to the TatB family. The Tat system comprises two distinct complexes: a TatABC complex, containing multiple copies of TatA, TatB and TatC subunits, and a separate TatA complex, containing only TatA subunits. Substrates initially bind to the TatABC complex, which probably triggers association of the separate TatA complex to form the active translocon.

Its subcellular location is the cell membrane. Its function is as follows. Part of the twin-arginine translocation (Tat) system that transports large folded proteins containing a characteristic twin-arginine motif in their signal peptide across membranes. Together with TatC, TatB is part of a receptor directly interacting with Tat signal peptides. TatB may form an oligomeric binding site that transiently accommodates folded Tat precursor proteins before their translocation. This is Sec-independent protein translocase protein TatB from Streptomyces griseus subsp. griseus (strain JCM 4626 / CBS 651.72 / NBRC 13350 / KCC S-0626 / ISP 5235).